Reading from the N-terminus, the 252-residue chain is AA9 family lytic polysaccharide monooxygenase B (252 aa).

A signal peptide spans Met1 to Ala20. The Cu(2+) site is built by His21 and His106. Cys72 and Cys198 are joined by a disulfide. Asn158 carries N-linked (GlcNAc...) asparagine glycosylation. His184 and Gln193 together coordinate O2. Tyr195 contributes to the Cu(2+) binding site. Asn237 is a glycosylation site (N-linked (GlcNAc...) asparagine).

This sequence belongs to the polysaccharide monooxygenase AA9 family. Cu(2+) serves as cofactor.

Its subcellular location is the secreted. The catalysed reaction is [(1-&gt;4)-beta-D-glucosyl]n+m + reduced acceptor + O2 = 4-dehydro-beta-D-glucosyl-[(1-&gt;4)-beta-D-glucosyl]n-1 + [(1-&gt;4)-beta-D-glucosyl]m + acceptor + H2O.. Functionally, lytic polysaccharide monooxygenase (LPMO) that depolymerizes crystalline and amorphous polysaccharides via the oxidation of scissile alpha- or beta-(1-4)-glycosidic bonds, yielding C1 or C4 oxidation products. Catalysis by LPMOs requires the reduction of the active-site copper from Cu(II) to Cu(I) by a reducing agent and H(2)O(2) or O(2) as a cosubstrate. The synergistic activity of LPMO9B with xylanase Xyl10G or cellulase Cel5B shows efficient bioconversion rates of 56 and 174 percent in pretreated kenaf (Hibiscus cannabinus) and oak, respectively. In Gloeophyllum trabeum (strain ATCC 11539 / FP-39264 / Madison 617) (Brown rot fungus), this protein is AA9 family lytic polysaccharide monooxygenase B.